Reading from the N-terminus, the 27-residue chain is Kunitz-type serine protease inhibitor 3 (27 aa).

The 27-residue stretch at 1 to 27 (EVHNFACLGKPDPGGCAHYIYRRYYYV) folds into the BPTI/Kunitz inhibitor domain.

The protein resides in the secreted. Functionally, inhibits bovine trypsin and human neutrophil elastase. The chain is Kunitz-type serine protease inhibitor 3 from Rhipicephalus microplus (Cattle tick).